Here is a 427-residue protein sequence, read N- to C-terminus: Probable purple acid phosphatase 20 (427 aa).

The N-terminal stretch at 1–21 (MVKVLGLVAILLIVLAGNVLS) is a signal peptide. Residue Asn-85 is glycosylated (N-linked (GlcNAc...) asparagine). 3 residues coordinate Fe cation: Asp-147, Asp-174, and Tyr-177. Asp-174 serves as a coordination point for Zn(2+). The Zn(2+) site is built by Asn-207 and His-291. Asn-207 is a substrate binding site. The active-site Proton donor is the His-301. His-330 provides a ligand contact to Zn(2+). 330-332 (HVH) lines the substrate pocket. Residue His-332 participates in Fe cation binding. N-linked (GlcNAc...) asparagine glycosylation occurs at Asn-392.

This sequence belongs to the metallophosphoesterase superfamily. Purple acid phosphatase family. In terms of assembly, homodimer. Fe cation is required as a cofactor. The cofactor is Zn(2+). Expressed flowers and siliques.

The protein resides in the secreted. It catalyses the reaction a phosphate monoester + H2O = an alcohol + phosphate. The sequence is that of Probable purple acid phosphatase 20 (PAP20) from Arabidopsis thaliana (Mouse-ear cress).